A 502-amino-acid polypeptide reads, in one-letter code: GTPase Obg (502 aa).

Residues 2–159 (NRFIDRVVLH…HDLILELKSM (158 aa)) form the Obg domain. Positions 160-341 (ADVGLVGFPS…LKYKLLEIVQ (182 aa)) constitute an OBG-type G domain. Residues 166–173 (GFPSAGKS), 191–195 (FTTLQ), 212–215 (DVPG), 292–295 (NKAD), and 322–324 (SAV) contribute to the GTP site. The Mg(2+) site is built by S173 and T193. The OCT domain occupies 364 to 444 (DGRRRREEFE…IGGVTFEWEP (81 aa)).

This sequence belongs to the TRAFAC class OBG-HflX-like GTPase superfamily. OBG GTPase family. As to quaternary structure, monomer. Mg(2+) serves as cofactor.

The protein localises to the cytoplasm. In terms of biological role, an essential GTPase which binds GTP, GDP and possibly (p)ppGpp with moderate affinity, with high nucleotide exchange rates and a fairly low GTP hydrolysis rate. Plays a role in control of the cell cycle, stress response, ribosome biogenesis and in those bacteria that undergo differentiation, in morphogenesis control. The sequence is that of GTPase Obg from Corynebacterium efficiens (strain DSM 44549 / YS-314 / AJ 12310 / JCM 11189 / NBRC 100395).